Consider the following 216-residue polypeptide: MNLILMGLPGAGKGTQAEQIVAKYNIPHISTGDMFRAAMKAETELGLQAKSFIDKGALVPDEVTIGIVRERLSQEDCIKGFLLDGFPRTVAQASALEEIMKDLGKKIDYVLNINVDSGLLLTRLTGRRICKECGATYHLEFNPPAKADVCDKCGGELYQRSDDNEETVANRLDVNIKQTKPLLDFYEELGYLQSINGEQDINKVFADIDVLIGGLA.

ATP is bound at residue 10-15; sequence GAGKGT. The NMP stretch occupies residues 30–59; it reads STGDMFRAAMKAETELGLQAKSFIDKGALV. Residues Thr-31, Arg-36, 57–59, 85–88, and Gln-92 contribute to the AMP site; these read ALV and GFPR. Positions 126–163 are LID; it reads GRRICKECGATYHLEFNPPAKADVCDKCGGELYQRSDD. Arg-127 lines the ATP pocket. Cys-130 and Cys-133 together coordinate Zn(2+). 136–137 is a binding site for ATP; it reads TY. The Zn(2+) site is built by Cys-150 and Cys-153. Positions 160 and 171 each coordinate AMP. Residue Gln-199 coordinates ATP.

It belongs to the adenylate kinase family. In terms of assembly, monomer.

The protein localises to the cytoplasm. The enzyme catalyses AMP + ATP = 2 ADP. The protein operates within purine metabolism; AMP biosynthesis via salvage pathway; AMP from ADP: step 1/1. Catalyzes the reversible transfer of the terminal phosphate group between ATP and AMP. Plays an important role in cellular energy homeostasis and in adenine nucleotide metabolism. The polypeptide is Adenylate kinase (Bacillus mycoides (strain KBAB4) (Bacillus weihenstephanensis)).